Here is a 530-residue protein sequence, read N- to C-terminus: C2H2-type transcription factor MSN2 (530 aa).

C2H2-type zinc fingers lie at residues 409–437 and 438–465; these read FVCDLCNRRFRRQEHLKRHYRSLHTQEKP and FECNECGKKFSRSDNLAQHARTHASGGA.

Its subcellular location is the nucleus. It is found in the cytoplasm. Transcription factor that acts as a key downstream transcription factor in the HOG1-MAPK pathway. Plays crucial roles in the regulation of dimorphism transition, aggravated pigmentation, conidiation, microsclerotia formation and subsequent virulence towards Spodoptera litura larvae. More specifically regulates the expression of genes involved in antioxidation, pigment biosynthesis and ion transport and storage. The polypeptide is C2H2-type transcription factor MSN2 (Metarhizium rileyi (strain RCEF 4871) (Nomuraea rileyi)).